The following is a 3744-amino-acid chain: SAGA complex/NuA4 acetyltransferase complex subunit TRA1 (3744 aa).

Serine 2 carries the N-acetylserine modification. 4 HEAT repeats span residues 2 to 40 (SLTE…LLNS), 46 to 92 (FFLQ…NQTF), 94 to 131 (PYAM…SFKS), and 135 to 172 (DKLD…DLDS). The HEAT stretch occupies residues 2–2598 (SLTEQIEQFA…KPYHTRQISS (2597 aa)). Serine 172 bears the Phosphoserine mark. Over residues 185–195 (FSKNDEEKDFP) the composition is skewed to basic and acidic residues. The disordered stretch occupies residues 185 to 212 (FSKNDEEKDFPSKQSSTEPRFENSTSSN). The span at 196–212 (SKQSSTEPRFENSTSSN) shows a compositional bias: polar residues. HEAT repeat units follow at residues 247 to 284 (PEFT…ISTE), 319 to 357 (QDYV…ILST), and 437 to 477 (KLLL…RFKT). Residues 522–539 (LEPSDDDHLMPQPKKEDI) are compositionally biased toward basic and acidic residues. Residues 522 to 546 (LEPSDDDHLMPQPKKEDINDSPDVE) are disordered. The residue at position 542 (serine 542) is a Phosphoserine. HEAT repeat units lie at residues 588–628 (RTLM…VFSY), 734–771 (PNFA…LSFM), 779–821 (INEV…SIGG), 829–867 (RSIK…TVPV), 870–910 (SVLA…NLTA), 919–958 (PVID…RNRQ), 1074–1112 (NQEN…HFCL), 1188–1225 (SFIP…NVKS), 1283–1320 (KVLE…LTGI), 1369–1408 (TFNE…SEQL), 1435–1472 (NIRI…ENSK), 1476–1512 (ELLQ…LLIA), 1693–1734 (LKLK…RFTE), 1739–1776 (DQNP…SSNK), 1918–1955 (FPIK…VLHE), 2115–2155 (ELGL…LDSE), 2182–2219 (ENLP…AIKA), 2230–2267 (SPGK…FMNF), 2269–2307 (DNIV…ARIT), and 2536–2573 (IISS…SIPK). The segment at 2599 to 3744 (RTNVINMLLD…RTDVNFMPWF (1146 aa)) is head. The FAT domain occupies 2622-3177 (LVKYLAISYN…HFQLRTTKED (556 aa)). One can recognise a PI3K/PI4K catalytic domain in the interval 3374–3732 (FLPTVDFVRG…CIGSAVSPRN (359 aa)). Residues 3380–3386 (FVRGTHS) form a G-loop region. The interval 3563–3571 (MINNRTPHK) is catalytic loop. Residues 3600 to 3625 (LKNHDLSLPPDSPIFHNNEPVPFRLT) are activation loop. The 33-residue stretch at 3712–3744 (TPTVTTQFILDCIGSAVSPRNLARTDVNFMPWF) folds into the FATC domain.

This sequence belongs to the PI3/PI4-kinase family. TRA1 subfamily. Component of the 1.8 MDa SAGA (Spt-Ada-Gcn5 acetyltransferase) complex, which is composed of 19 subunits TRA1, SPT7, TAF5, NGG1/ADA3, SGF73, SPT20/ADA5, SPT8, TAF12, TAF6, HFI1/ADA1, UBP8, GCN5, ADA2, SPT3, SGF29, TAF10, TAF9, SGF11 and SUS1. The SAGA complex is composed of 4 modules, namely the HAT (histone acetyltransferase) module (GCN5, ADA2, NGG1/ADA3 and SGF29), the DUB (deubiquitinating) module (UBP8, SGF11, SGF73 and SUS1), the core or TAF (TBP-associated factor) module (TAF5, TAF6, TAF9, TAF10 and TAF12), and the Tra1 or SPT (Suppressor of Ty) module (TRA1, HFI1/ADA1, SPT3, SPT7, SPT8 and SPT20/ADA5). The Tra1/SPT module binds activators, the core module recruits TBP (TATA-binding protein), the HAT module contains the histone H3 acetyltransferase GCN5, and the DUB module comprises the histone H2B deubiquitinase UBP8. Also identified in an altered form of SAGA, named SALSA (SAGA altered, Spt8 absent) or SLIK (SAGA-like) complex, which contains a C-terminal truncated form of SPT7 and is missing SPT8. However, it has been shown that the SAGA and SAGA-like SALSA/SLIK transcriptional coactivators are structurally and biochemically equivalent. Component of the NuA4 acetyltransferase complex, which consists of the catalytic subunit ESA1 and the 12 non-catalytic subunits ACT1, ARP4, EAF1/VID21, SWC4/EAF2, EAF3, EAF5, EAF6, EAF7, EPL1, TRA1, YAF9 and YNG2. TRA1 is the scaffold subunit for binding to a variety of transcription activators or transcription factors to recruit NuA4 for targeted gene activation. Identified in the Ada.spt complex with NGG1/ADA3 and SPT7.

It is found in the nucleus. In terms of biological role, essential scaffold subunit of the transcription coactivator SAGA complex. SAGA acts as a general cofactor required for essentially all RNA polymerase II transcription. At the promoters, SAGA is required for transcription pre-initiation complex (PIC) recruitment. It influences RNA polymerase II transcriptional activity through different activities such as TBP interaction (via core/TAF module) and promoter selectivity, interaction with transcription activators (via Tra1/SPT module), and chromatin modification through histone acetylation (via HAT module) and deubiquitination (via DUB module). SAGA preferentially acetylates histones H3 (to form H3K9ac, H3K14ac, H3K18ac and H3K23ac) and H2B and deubiquitinates histone H2B. SAGA interacts with DNA via upstream activating sequences (UASs). Also identified in a modified version of SAGA named SALSA or SLIK. The cleavage of SPT7 and the absence of the SPT8 subunit in SLIK neither drive any major conformational differences in its structure compared with SAGA, nor significantly affect HAT, DUB, or DNA-binding activities. Component of the NuA4 histone H4/H2A acetyltransferase involved in transcription and DNA repair. In Saccharomyces cerevisiae (strain ATCC 204508 / S288c) (Baker's yeast), this protein is SAGA complex/NuA4 acetyltransferase complex subunit TRA1.